Here is a 687-residue protein sequence, read N- to C-terminus: SLCO1B3-SLCO1B7 readthrough transcript protein (687 aa).

At 1–29 (MDQHQHLNKTAESASSEKKKTRRCNGFKM) the chain is on the cytoplasmic side. Residues 30–50 (FLAALSFSYIAKALGGIIMKI) traverse the membrane as a helical segment. Residues 51 to 63 (SITQIERRFDISS) lie on the Extracellular side of the membrane. The chain crosses the membrane as a helical span at residues 64–84 (SLAGLIDGSFEIGNLLVIVFV). Residues 85–96 (SYFGSKLHRPKL) are Cytoplasmic-facing. The helical transmembrane segment at 97–117 (IGIGCLLMGTGSILTSLPHFF) threads the bilayer. The Extracellular portion of the chain corresponds to 118-170 (MGYYRYSKETNIDPSENSTSNLPNCLINQMLSLNRTPSEIIERGCVKESGSHM). N-linked (GlcNAc...) asparagine glycans are attached at residues Asn134 and Asn151. Residues 171–191 (WIYVFMGNMLRGIGETPIVPL) form a helical membrane-spanning segment. Residues 192–206 (GISYIDDFAKEGHSS) lie on the Cytoplasmic side of the membrane. The chain crosses the membrane as a helical span at residues 207-227 (LYLGTVNVMGMTGLVFAFMLG). Topologically, residues 228 to 258 (SLFAKMYVDIGYVDLSTIRITPKDSRWVGAW) are extracellular. Residues 259 to 279 (WLGFLVSGIVSIISSIPFFFL) form a helical membrane-spanning segment. Topologically, residues 280 to 339 (PLNPNKPQKERKVSLFLHVLKTNDKRNQIANLTNRRKYITKNVTGFFQSLKSILTNPLYV) are cytoplasmic. The helical transmembrane segment at 340–360 (IFVIFTLLHMSSYIASLTYII) threads the bilayer. At 361 to 376 (KMVEQQYGWSASKTNF) the chain is on the extracellular side. Residues 377–397 (LLGVLALPAVAIGMFSGGYII) form a helical membrane-spanning segment. The Cytoplasmic portion of the chain corresponds to 398–409 (KKFKLSLVGLAK). Residues 410–430 (LAFCSATVHLLSQVLYFFLIC) form a helical membrane-spanning segment. Residues 431–539 (ESKSVAGLTL…CTRKSYVYFV (109 aa)) are Extracellular-facing. The Kazal-like domain maps to 453 to 508 (DVPLSYCNSECNCDESQWEPVCGNNGITYLSPCLAGCKSSSGNKEPIVFYNCSCVE). Intrachain disulfides connect Cys459/Cys489, Cys465/Cys485, and Cys474/Cys506. Residues Asn503 and Asn516 are each glycosylated (N-linked (GlcNAc...) asparagine). A helical membrane pass occupies residues 540 to 560 (IQVLDAFLCAVGLTSYSVLVI). Residues 561 to 568 (RIVQPELK) are Cytoplasmic-facing. Residues 569-589 (ALAIGFHSMIMRSLGGILVPI) form a helical membrane-spanning segment. The Extracellular segment spans residues 590–624 (YFGALIDTTCMKWSTNSCGARGACRIYNSTYLGRA). N-linked (GlcNAc...) asparagine glycosylation is present at Asn617. Residues 625-645 (FFGLKVALIFPVLVLLTVFIF) form a helical membrane-spanning segment. Topologically, residues 646 to 687 (VVRKKSHGKDTKVLENERQVMDEANLEFLNDSEHFVPSAEEQ) are cytoplasmic.

Belongs to the organo anion transporter (TC 2.A.60) family. In terms of tissue distribution, expressed in the perivenular areas (centrilobular) of the liver (at protein level).

The protein localises to the smooth endoplasmic reticulum membrane. It localises to the cell membrane. Its subcellular location is the endoplasmic reticulum membrane. It carries out the reaction 17beta-estradiol 17-O-(beta-D-glucuronate)(out) = 17beta-estradiol 17-O-(beta-D-glucuronate)(in). The catalysed reaction is dehydroepiandrosterone 3-sulfate(out) = dehydroepiandrosterone 3-sulfate(in). The enzyme catalyses taurocholate(out) = taurocholate(in). It catalyses the reaction lithocholate(out) = lithocholate(in). Its activity is regulated as follows. Transport activity is induced by farnesoid X receptor (FXR) agonists such as chenodeoxycholate. Functionally, mediates the Na(+)-independent uptake of organic anions. Transports the conjugated steroids 17-beta-glucuronosyl estradiol (17beta-estradiol 17-O-(beta-D-glucuronate) or E2G) and dehydroepiandrosterone 3-sulfate (DHEAS) at the smooth endoplasmic reticulum membrane (SER), granting access to metabolizing enzymes. Contributes to the metabolism of bile acids such as taurocholate (cholyltaurine) and lithocholate, by functioning as a doorway between SER and cytosol, thereby decreasing their circulating levels and protecting the organism from their detergent properties. Regulates access or exit of drugs to the SER lumen. The chain is SLCO1B3-SLCO1B7 readthrough transcript protein from Homo sapiens (Human).